The sequence spans 247 residues: Geranylgeranylglyceryl phosphate synthase (247 aa).

2 residues coordinate Mg(2+): aspartate 23 and serine 52. Residues 171–177 (YLEAGSG), 203–204 (GG), and 225–226 (GT) each bind sn-glycerol 1-phosphate.

This sequence belongs to the GGGP/HepGP synthase family. Group II subfamily. It depends on Mg(2+) as a cofactor.

It localises to the cytoplasm. The enzyme catalyses sn-glycerol 1-phosphate + (2E,6E,10E)-geranylgeranyl diphosphate = sn-3-O-(geranylgeranyl)glycerol 1-phosphate + diphosphate. It functions in the pathway membrane lipid metabolism; glycerophospholipid metabolism. In terms of biological role, prenyltransferase that catalyzes the transfer of the geranylgeranyl moiety of geranylgeranyl diphosphate (GGPP) to the C3 hydroxyl of sn-glycerol-1-phosphate (G1P). This reaction is the first ether-bond-formation step in the biosynthesis of archaeal membrane lipids. This chain is Geranylgeranylglyceryl phosphate synthase, found in Methanosarcina acetivorans (strain ATCC 35395 / DSM 2834 / JCM 12185 / C2A).